Consider the following 214-residue polypeptide: Large ribosomal subunit protein uL3 (214 aa).

Residues 133 to 155 (ATHGNSRSHRVPGSTGQCQSPGR) form a disordered region. At Gln-151 the chain carries N5-methylglutamine.

It belongs to the universal ribosomal protein uL3 family. As to quaternary structure, part of the 50S ribosomal subunit. Forms a cluster with proteins L14 and L19. In terms of processing, methylated by PrmB.

One of the primary rRNA binding proteins, it binds directly near the 3'-end of the 23S rRNA, where it nucleates assembly of the 50S subunit. The protein is Large ribosomal subunit protein uL3 of Cellvibrio japonicus (strain Ueda107) (Pseudomonas fluorescens subsp. cellulosa).